Consider the following 156-residue polypeptide: Ribosomal RNA large subunit methyltransferase H (156 aa).

Residues leucine 73, glycine 104, and 123 to 128 (LSSLTL) each bind S-adenosyl-L-methionine.

The protein belongs to the RNA methyltransferase RlmH family. Homodimer.

The protein resides in the cytoplasm. The enzyme catalyses pseudouridine(1915) in 23S rRNA + S-adenosyl-L-methionine = N(3)-methylpseudouridine(1915) in 23S rRNA + S-adenosyl-L-homocysteine + H(+). Specifically methylates the pseudouridine at position 1915 (m3Psi1915) in 23S rRNA. This chain is Ribosomal RNA large subunit methyltransferase H, found in Neisseria meningitidis serogroup C / serotype 2a (strain ATCC 700532 / DSM 15464 / FAM18).